A 366-amino-acid chain; its full sequence is Methyltransferase calH (366 aa).

S-adenosyl-L-methionine contacts are provided by residues Thr189, Asp216, and 245–246 (NA).

This sequence belongs to the class I-like SAM-binding methyltransferase superfamily.

The protein operates within secondary metabolite biosynthesis. Functionally, methyltransferase; part of the gene cluster that mediates the biosynthesis of calbistrin A and related compounds. Calbistrin A is a secondary metabolite with an interesting structure that was recently found to have bioactivity against leukemia cells. It consists of two polyketides linked by an ester bond: a bicyclic decalin containing polyketide and a linear 12 carbon dioic acid structure. The polyketide synthase calA is probably responsible for forming the decalin moiety. Because calA lacks a designated enoylreductase (ER) domain, the required activity is provided by the trans-enoyl reductase calK. Following release from the PKS, calF then probably catalyzes the oxidation and the subsequent Diels Alder cycloisomerization that lead to the formation of the decalin moiety. The decalin polyketide backbone includes two C-methyl groups, at C7 and C11 in backbone, of which the C7 position is probably methylated by the methyltransferase domain of calA. A candidate for adding the methyl group at C11, if not done by CalA, is the cluster methyltransferase calH. Several additional tailoring enzymes within the cluster could be involved in the modification of the decalin polyketide product. Those include the 3 cytochrome P450 monooxygenases CalE, CalG and CalL, of which one might be responsible for the introduction of the extra hydroxyl group attached to the backbone of the decalin moiety, at position C9 in the backbone, that allows for attachment of the linear moiety. One tailoring enzyme activity that is expected to be involved in biosynthesis of calbistrin is an acyltransferase for connecting the two polyketide synthase products, and which could be performed by the cluster acyltransferase calJ. The enzyme responsible for the biosynthesis of the linear moiety, probably a second PKS, has not been identified yet. This is Methyltransferase calH from Penicillium decumbens.